Reading from the N-terminus, the 509-residue chain is Zinc finger CCCH-type with G patch domain-containing protein (509 aa).

The C3H1-type zinc finger occupies proline 155–leucine 178. Residues glutamate 253–aspartate 277 form a disordered region. Residues threonine 310–glutamate 356 enclose the G-patch domain. Residues glycine 409–glutamine 430 are disordered. The span at glutamate 411–alanine 420 shows a compositional bias: basic and acidic residues.

The protein resides in the nucleus. Its function is as follows. Transcription repressor. The chain is Zinc finger CCCH-type with G patch domain-containing protein from Drosophila persimilis (Fruit fly).